Here is a 285-residue protein sequence, read N- to C-terminus: tRNA (adenine(58)-N(1))-methyltransferase catalytic subunit TRMT61A (285 aa).

At S2 the chain carries N-acetylserine. 5 substrate regions span residues 20-22 (LGH), 35-42 (QTQTRHGV), 64-65 (GW), 85-89 (QILYS), and 110-117 (SGTGSGSV). S-adenosyl-L-methionine is bound by residues L87, 114-116 (SGS), E135, R140, 163-164 (DV), and D181. 2 substrate regions span residues 180–183 (LDIP) and 205–212 (SFSPCIEQ). A substrate-binding site is contributed by T274.

Belongs to the class I-like SAM-binding methyltransferase superfamily. TRM61 family. As to quaternary structure, heterotetramer; composed of two copies of TRMT6 and two copies of TRMT61A.

Its subcellular location is the nucleus. The catalysed reaction is adenosine(58) in tRNA + S-adenosyl-L-methionine = N(1)-methyladenosine(58) in tRNA + S-adenosyl-L-homocysteine + H(+). It catalyses the reaction an adenosine in mRNA + S-adenosyl-L-methionine = an N(1)-methyladenosine in mRNA + S-adenosyl-L-homocysteine + H(+). Functionally, catalytic subunit of tRNA (adenine-N(1)-)-methyltransferase, which catalyzes the formation of N(1)-methyladenine at position 58 (m1A58) in initiator methionyl-tRNA. Catalytic subunit of mRNA N(1)-methyltransferase complex, which mediates methylation of adenosine residues at the N(1) position of a small subset of mRNAs: N(1) methylation takes place in tRNA T-loop-like structures of mRNAs and is only present at low stoichiometries. The sequence is that of tRNA (adenine(58)-N(1))-methyltransferase catalytic subunit TRMT61A (TRMT61A) from Bos taurus (Bovine).